Reading from the N-terminus, the 325-residue chain is 6-hydroxymellein 5-farnesyltransferase cdmH (325 aa).

Helical transmembrane passes span 60 to 80 (ASILRLAGLCTAHCVLLGAAG), 113 to 133 (AFTWMAFLYSTSVGMLKAMLG), 138 to 158 (WPFMVPLTAIILVYPLGKRPI), 169 to 189 (LLGIAVGYPTMYGWAAVYGPC), and 192 to 212 (ISEILHRCVPLWIFLFFWSFY). Residue N214 is glycosylated (N-linked (GlcNAc...) asparagine). A run of 3 helical transmembrane segments spans residues 243–263 (ALLAILASIALSTIPFVLRPF), 267–287 (WLWLSWVGAWVPGIIQQLLSF), and 295–315 (GGVLHLSTVKLGLWTVFACTL).

It belongs to the UbiA prenyltransferase family. Mg(2+) serves as cofactor.

It is found in the membrane. The enzyme catalyses 6-hydroxymellein + (2E,6E)-farnesyl diphosphate = verruculide C + diphosphate. It participates in secondary metabolite biosynthesis; terpenoid biosynthesis. Functionally, 6-hydroxymellein 5-farnesyltransferase; part of the gene cluster that mediates the biosynthesis of chrodrimanin B, a meroterpenoid that acts as a potent blocker of insect GABA-gated chloride channels. The first step of the pathway is the biosynthesis of 6-hydroxymellein by the polyketide synthase cdmE. The prenyltransferase cdmH acts as a 6-hydroxymellein 5-farnesyltransferase and produces the hydrophobic metabolite verruculide C. The FAD-dependent monooxygenase cdmI further converts verruculide C into verruculide B. The terpene cyclase cdmG then produced the pentacyclic molecule 3-hydroxypentacecilide A, the backbone structure of chrodrimanin B, via folding the farnesyl moiety of the substrate into the chair-boat conformation. The short-chain dehydrogenase/reductase cdmF functions as the 3-OH dehydrogenase that oxidizes the C-3 hydroxyl group of 3-hydroxypentacecilide A and produces chrodrimanin C, the dehydrogenated product of 3-hydroxypentacecilide A. The cytochrome P450 monooxygenase cdmJ then accepts both 3-hydroxypentacecilide A and chrodrimanin C and functions as a C-7-beta-hydroxylase to produce respectively chrodrimanin H and chrodrimanin F. The dioxygenase cdmA accepts chrodrimanin H to afford chrodrimanin E, which is further transformed to chrodrimanin A by the dioxygenase cdmD. CdmA can also accept chrodrimanin C as substrate to convert it into verruculide A, which is further converted into chrodrimanin T by cdmD. The last step of the biosynthesis is proposed to be performed by the acetyltransferase cdmC which acetylates chrodrimanin A to yield chrodrimanin B. The pathway may also lead to the production of additional shunt products, including chrodrimanins T and U. The chain is 6-hydroxymellein 5-farnesyltransferase cdmH from Talaromyces verruculosus (Penicillium verruculosum).